Reading from the N-terminus, the 186-residue chain is GPI-anchored hemophore ARB_02741 (186 aa).

Residues 1–18 form the signal peptide; that stretch reads MKFSQAVIALAAATVVSA. Residues 19–108 enclose the CFEM domain; it reads QLPDVPQCSL…SSKPSEPSTS (90 aa). Intrachain disulfides connect Cys-26-Cys-67, Cys-30-Cys-62, Cys-40-Cys-48, and Cys-50-Cys-83. Asp-45 contacts heme. Residues 89 to 159 are disordered; sequence PVSIPPVEES…NTGVPTQSTP (71 aa). The segment covering 96 to 131 has biased composition (low complexity); sequence EESSSKPSEPSTSEAPTASPTESTPAPTTPAPTGTG. The span at 132–144 shows a compositional bias: gly residues; sequence SPSGTGAPGGPSG. The span at 148–159 shows a compositional bias: polar residues; that stretch reads FTNTGVPTQSTP. Gly-163 is lipidated: GPI-anchor amidated glycine. Positions 164 to 186 are cleaved as a propeptide — removed in mature form; sequence AASGLSANIGGMGAAILAIAAYL.

It belongs to the RBT5 family. Post-translationally, the GPI-anchor is attached to the protein in the endoplasmic reticulum and serves to target the protein to the cell surface. There, the glucosamine-inositol phospholipid moiety is cleaved off and the GPI-modified mannoprotein is covalently attached via its lipidless GPI glycan remnant to the 1,6-beta-glucan of the outer cell wall layer.

Its subcellular location is the secreted. It localises to the cell wall. The protein localises to the cell membrane. Functionally, GPI-anchored cell wall protein involved in stabilizing the cell wall. This chain is GPI-anchored hemophore ARB_02741, found in Arthroderma benhamiae (strain ATCC MYA-4681 / CBS 112371) (Trichophyton mentagrophytes).